Here is a 300-residue protein sequence, read N- to C-terminus: MTDDTRTRLVAALRGELRFNEPMARHTALKVGGPADFFAIPADPSDLQSLMAVILEMGMPYLVVGGGYNLLVRDGGFRGVVISLKQFCSMEKLPDNRLRAEAGSTNQQLVRFANGQGLTGLEFLSGIPGMVGGALSVNAGAHGRSVLELVESLTTLQGGKITVTFREDLRYGYRHLELKPGEIVLAAVFSLAAGDAEEIEGRIQGYLEHRRNSQRVGYPNAGSFFKNPEGKQAWRLIDEAGLRGCQIGGAQVSEVHTNFLVNRGGAMAADFLQLAQVIKSKVRERSGIDLEEEVRIVGVD.

An FAD-binding PCMH-type domain is found at 30 to 194 (KVGGPADFFA…LAAVFSLAAG (165 aa)). The active site involves Arg-174. Ser-223 (proton donor) is an active-site residue. Glu-293 is an active-site residue.

Belongs to the MurB family. The cofactor is FAD.

It is found in the cytoplasm. The enzyme catalyses UDP-N-acetyl-alpha-D-muramate + NADP(+) = UDP-N-acetyl-3-O-(1-carboxyvinyl)-alpha-D-glucosamine + NADPH + H(+). It functions in the pathway cell wall biogenesis; peptidoglycan biosynthesis. In terms of biological role, cell wall formation. The protein is UDP-N-acetylenolpyruvoylglucosamine reductase of Geotalea uraniireducens (strain Rf4) (Geobacter uraniireducens).